A 153-amino-acid chain; its full sequence is 3-hydroxyacyl-[acyl-carrier-protein] dehydratase FabZ (153 aa).

Residue His54 is part of the active site.

This sequence belongs to the thioester dehydratase family. FabZ subfamily.

Its subcellular location is the cytoplasm. The catalysed reaction is a (3R)-hydroxyacyl-[ACP] = a (2E)-enoyl-[ACP] + H2O. Its function is as follows. Involved in unsaturated fatty acids biosynthesis. Catalyzes the dehydration of short chain beta-hydroxyacyl-ACPs and long chain saturated and unsaturated beta-hydroxyacyl-ACPs. The chain is 3-hydroxyacyl-[acyl-carrier-protein] dehydratase FabZ from Shewanella amazonensis (strain ATCC BAA-1098 / SB2B).